Consider the following 362-residue polypeptide: MTDAGKRILVMAGGTGGHVFPALAVAKYLAQQGWQVRWLGTADRMEARLVPQYGFDIDFIDIKGVRGNGLVRKLAAPFKVVRSILQAKAVIAEFKPDVVLGMGGFASGPGGVAAKLAGVPLVLHEQNAIPGMTNKLLSRIANQVLCAFKNTFTQVKAKVVGNPIRRELIALGAEPKQAADDALKVLVVGGSLGAKVFNDLMPEVVAALSKQQSITVWHQVGKDNLTGVKSAYQQQGQDGGVNVAEFIDDMEAAYRWADVVLCRAGALTVSELAAVGLPSILVPYPHAVDDHQTRNAQVLVEAGAAFLLPQAILDVNKLVSKLQLLANDRAELAQMGQRAREVAVLDATEQVAQVCIALAEKG.

UDP-N-acetyl-alpha-D-glucosamine-binding positions include 15-17 (TGG), asparagine 127, arginine 165, serine 191, isoleucine 247, 266-271 (ALTVSE), and glutamine 292.

This sequence belongs to the glycosyltransferase 28 family. MurG subfamily.

The protein resides in the cell inner membrane. The catalysed reaction is di-trans,octa-cis-undecaprenyl diphospho-N-acetyl-alpha-D-muramoyl-L-alanyl-D-glutamyl-meso-2,6-diaminopimeloyl-D-alanyl-D-alanine + UDP-N-acetyl-alpha-D-glucosamine = di-trans,octa-cis-undecaprenyl diphospho-[N-acetyl-alpha-D-glucosaminyl-(1-&gt;4)]-N-acetyl-alpha-D-muramoyl-L-alanyl-D-glutamyl-meso-2,6-diaminopimeloyl-D-alanyl-D-alanine + UDP + H(+). The protein operates within cell wall biogenesis; peptidoglycan biosynthesis. Its function is as follows. Cell wall formation. Catalyzes the transfer of a GlcNAc subunit on undecaprenyl-pyrophosphoryl-MurNAc-pentapeptide (lipid intermediate I) to form undecaprenyl-pyrophosphoryl-MurNAc-(pentapeptide)GlcNAc (lipid intermediate II). The protein is UDP-N-acetylglucosamine--N-acetylmuramyl-(pentapeptide) pyrophosphoryl-undecaprenol N-acetylglucosamine transferase of Shewanella sp. (strain MR-4).